A 131-amino-acid polypeptide reads, in one-letter code: MEVGVGIHIIADFYGVDSELIATTERMYPIIEGAVEYGRLTKISSDYYQFRPKGASGIVLLAESHLSFHTWPEYGLVTLDIYTCGDPKTADDAFAYLVDKLRPTSISTRKIVRGDMIEEAGENQIEEAALH.

S64 (schiff-base intermediate with substrate; via pyruvic acid) is an active-site residue. S64 is subject to Pyruvic acid (Ser); by autocatalysis. H69 serves as the catalytic Proton acceptor; for processing activity. C84 functions as the Proton donor; for catalytic activity in the catalytic mechanism.

This sequence belongs to the prokaryotic AdoMetDC family. Type 1 subfamily. As to quaternary structure, heterotetramer of two alpha and two beta chains arranged as a dimer of alpha/beta heterodimers. Requires pyruvate as cofactor. Post-translationally, is synthesized initially as an inactive proenzyme. Formation of the active enzyme involves a self-maturation process in which the active site pyruvoyl group is generated from an internal serine residue via an autocatalytic post-translational modification. Two non-identical subunits are generated from the proenzyme in this reaction, and the pyruvate is formed at the N-terminus of the alpha chain, which is derived from the carboxyl end of the proenzyme. The post-translation cleavage follows an unusual pathway, termed non-hydrolytic serinolysis, in which the side chain hydroxyl group of the serine supplies its oxygen atom to form the C-terminus of the beta chain, while the remainder of the serine residue undergoes an oxidative deamination to produce ammonia and the pyruvoyl group blocking the N-terminus of the alpha chain.

The enzyme catalyses S-adenosyl-L-methionine + H(+) = S-adenosyl 3-(methylsulfanyl)propylamine + CO2. The protein operates within amine and polyamine biosynthesis; S-adenosylmethioninamine biosynthesis; S-adenosylmethioninamine from S-adenosyl-L-methionine: step 1/1. Functionally, catalyzes the decarboxylation of S-adenosylmethionine to S-adenosylmethioninamine (dcAdoMet), the propylamine donor required for the synthesis of the polyamines spermine and spermidine from the diamine putrescine. This Thermoplasma acidophilum (strain ATCC 25905 / DSM 1728 / JCM 9062 / NBRC 15155 / AMRC-C165) protein is S-adenosylmethionine decarboxylase proenzyme.